Here is an 815-residue protein sequence, read N- to C-terminus: BTB/POZ domain-containing protein KCTD3 (815 aa).

Residues 18–87 (EIVQLNVGGT…LRTKELDLRG (70 aa)) form the BTB domain. The segment covering 139 to 168 (INNTVRSADSRNGLNSTEGEARGNGTQPVL) has biased composition (polar residues). A disordered region spans residues 139-170 (INNTVRSADSRNGLNSTEGEARGNGTQPVLSG). WD repeat units lie at residues 174–218 (ETVR…GWQQ), 224–263 (YLDWTIERVALNAKVVGGPHGDKDKMVAVASESSIILWSV), 270–305 (SEIGVFSLGVPVDALFFIGNQLVATSHTGKVGVWNA), 310–342 (WQVQDVVPITSYDTAGSFLLLGCNNGSIYYIDM), 354–404 (LLVT…VQHP), 412–449 (QLFQTFTVHRSPVTKIMLSEKHLVSVCADNNHVRTWTV), 457–504 (STQP…IQKV), and 510–569 (KLFV…MWDL). The interval 512–815 (FVRLSSTGKR…SDSSGQEYSL (304 aa)) is interaction with HCN3. A phosphoserine mark is found at Ser-604, Ser-664, and Ser-711. Over residues 736-758 (SESKKRSSEDENENKIEFRKKGG) the composition is skewed to basic and acidic residues. Residues 736 to 815 (SESKKRSSED…SDSSGQEYSL (80 aa)) form a disordered region. Residues 774-800 (ASSPSTSDGGTDSPGTASPSPTKTTPS) show a composition bias toward low complexity. Ser-793 is modified (phosphoserine).

The protein belongs to the KCTD3 family. In terms of assembly, interacts with HCN3. Broadly expressed in normal tissues.

It is found in the cell membrane. Functionally, accessory subunit of potassium/sodium hyperpolarization-activated cyclic nucleotide-gated channel 3 (HCN3) up-regulating its cell-surface expression and current density without affecting its voltage dependence and kinetics. The chain is BTB/POZ domain-containing protein KCTD3 (KCTD3) from Homo sapiens (Human).